The chain runs to 184 residues: Trypsin/chymotrypsin inhibitor (184 aa).

Intrachain disulfides connect Cys-39–Cys-84 and Cys-136–Cys-147.

It belongs to the protease inhibitor I3 (leguminous Kunitz-type inhibitor) family. In terms of assembly, homodimer.

Inhibits trypsin and alpha-chymotrypsin. In Alocasia macrorrhizos (Giant taro), this protein is Trypsin/chymotrypsin inhibitor.